A 52-amino-acid chain; its full sequence is Teratocyte protein CftICK-I (52 aa).

A signal peptide spans 1–19 (MYKLCILFLVVIFAVMAIA). 3 disulfides stabilise this stretch: Cys22–Cys37, Cys29–Cys41, and Cys36–Cys51.

Abundantly expressed by teratocytes, which are extra-embryonic cells released by parasitoid wasps into their hosts during larval eclosion.

It localises to the secreted. Functionally, this endoparasitoid wasp peptide has immununosuppressive, antimicrobial and insecticidal activities. Suppress cellular immunity which is detectable as a reduction of hemocyte encapsulation in the host. Shows potent antifungal activity against C.albicans (MIC~0.25 ug/ml). In vivo, ingestion of this peptide (probably at excessive doses) increases larval mortality and reduces leaf consumption of D.saccharalis, a permissive host for C.flavipes. The polypeptide is Teratocyte protein CftICK-I (Cotesia flavipes (Parasitic wasp)).